Reading from the N-terminus, the 314-residue chain is Protein nutcracker (314 aa).

Residues 1–62 (MSDTKSEIEG…PRLIQEKSTQ (62 aa)) form a disordered region. Low complexity predominate over residues 21–34 (QQQQQPQQQQNEQQ). The interval 257–314 (MQMEMKLQPSLLGLPDELYFEIFRYLDKSQLNVVARVNRHLHFYSKEVERKRLKGGRS) is required for interaction with skpA and Cul1, but not with PI31. Positions 264-309 (QPSLLGLPDELYFEIFRYLDKSQLNVVARVNRHLHFYSKEVERKRL) constitute an F-box domain.

In terms of assembly, component of an SCF (SKP1-CUL1-F-box protein) E3 ubiquitin-protein ligase complex, at least composed of ntc, skpA and Cul1. Interacts (via F-box domain) with skpA and Cul1. Interacts with Prosalpha7 and PI31. Interacts with Bruce. As to expression, expressed in testis (at protein level).

The protein localises to the cytoplasm. Functionally, functions together with PI31 to control non-apoptotic caspase activation during sperm individualization. Positively regulates PI31 stability. The protein is Protein nutcracker of Drosophila melanogaster (Fruit fly).